The primary structure comprises 753 residues: 5-methyltetrahydropteroyltriglutamate--homocysteine methyltransferase (753 aa).

5-methyltetrahydropteroyltri-L-glutamate is bound by residues 17–20 (RELK) and lysine 117. L-homocysteine is bound by residues 431–433 (IGS) and glutamate 484. L-methionine contacts are provided by residues 431–433 (IGS) and glutamate 484. 5-methyltetrahydropteroyltri-L-glutamate is bound by residues 515 to 516 (RC) and tryptophan 561. Aspartate 599 contributes to the L-homocysteine binding site. Aspartate 599 contributes to the L-methionine binding site. Glutamate 605 provides a ligand contact to 5-methyltetrahydropteroyltri-L-glutamate. 3 residues coordinate Zn(2+): histidine 641, cysteine 643, and glutamate 665. Histidine 694 serves as the catalytic Proton donor. Residue cysteine 726 participates in Zn(2+) binding.

Belongs to the vitamin-B12 independent methionine synthase family. Requires Zn(2+) as cofactor.

The enzyme catalyses 5-methyltetrahydropteroyltri-L-glutamate + L-homocysteine = tetrahydropteroyltri-L-glutamate + L-methionine. Its pathway is amino-acid biosynthesis; L-methionine biosynthesis via de novo pathway; L-methionine from L-homocysteine (MetE route): step 1/1. In terms of biological role, catalyzes the transfer of a methyl group from 5-methyltetrahydrofolate to homocysteine resulting in methionine formation. The sequence is that of 5-methyltetrahydropteroyltriglutamate--homocysteine methyltransferase from Escherichia coli O6:K15:H31 (strain 536 / UPEC).